The chain runs to 375 residues: MAKRDYYEVLGVERGASEAELKKAYRRLAMKYHPDRNPDDKGAEEKFKEANEAYEVLSDAGKRSAYDQYGHAGVDPQMGGGGGAGFGGANFSDIFGDVFSDFFGGGRGGSRGGAQRGSDLRYTLELDLEEAVRGTTVTIRVPTLVGCKTCDGTGAKKGTSPVTCTTCGGIGQVRMQQGFFSVQQTCPRCHGSGKMITDPCGSCHGQGRVEESKTLSVKVPPGVDTGDRIRLSGEGEAGTHGGPAGDLYVVVNVREHAIFQRDGKHLYCEVPISFADAALGGELEVPTLDGRVKLKIPEGTQTGKLFRLRGKGVAPVRGGAAGDLMCRVAVETPVNLNKRQRELLDEFRKSLQGDDSHSPKASGWFEGVKRFFGDV.

The 66-residue stretch at 5–70 folds into the J domain; the sequence is DYYEVLGVER…GKRSAYDQYG (66 aa). The CR-type zinc-finger motif lies at 134–212; sequence GTTVTIRVPT…CHGQGRVEES (79 aa). Zn(2+) is bound by residues C147, C150, C164, C167, C186, C189, C200, and C203. CXXCXGXG motif repeat units follow at residues 147–154, 164–171, 186–193, and 200–207; these read CKTCDGTG, CTTCGGIG, CPRCHGSG, and CGSCHGQG.

It belongs to the DnaJ family. In terms of assembly, homodimer. Zn(2+) is required as a cofactor.

It is found in the cytoplasm. Functionally, participates actively in the response to hyperosmotic and heat shock by preventing the aggregation of stress-denatured proteins and by disaggregating proteins, also in an autonomous, DnaK-independent fashion. Unfolded proteins bind initially to DnaJ; upon interaction with the DnaJ-bound protein, DnaK hydrolyzes its bound ATP, resulting in the formation of a stable complex. GrpE releases ADP from DnaK; ATP binding to DnaK triggers the release of the substrate protein, thus completing the reaction cycle. Several rounds of ATP-dependent interactions between DnaJ, DnaK and GrpE are required for fully efficient folding. Also involved, together with DnaK and GrpE, in the DNA replication of plasmids through activation of initiation proteins. The chain is Chaperone protein DnaJ from Ectopseudomonas mendocina (strain ymp) (Pseudomonas mendocina).